A 384-amino-acid chain; its full sequence is Actin-binding Rho-activating protein (384 aa).

Positions 1-11 are enriched in basic and acidic residues; sequence MARGEKGRGEG. Disordered regions lie at residues 1–20, 32–159, and 181–211; these read MARG…LRKV, GWQQ…SPTR, and EQEE…EQDG. Residues 35–47 are compositionally biased toward polar residues; the sequence is QWANENSTRQAQE. Positions 134 to 145 are enriched in acidic residues; it reads DGDEPEPEQPES. A phosphoserine mark is found at S156 and S191. 2 actin-binding regions span residues 202–302 and 303–384; these read ETEE…AERA and KRAE…TLLK. Interaction with actin regions lie at residues 243–288 and 355–384; these read SQVG…GDEG and MRAR…TLLK.

Binds F-actin and ABLIM1, ABLIM2 and ABLIM3. Interaction with ABLIM2 and ABLIM3 enhances activity. In terms of tissue distribution, specifically expressed in heart and skeletal muscles.

Its subcellular location is the cytoplasm. The protein resides in the myofibril. The protein localises to the sarcomere. It localises to the cytoskeleton. Functionally, acts as an activator of serum response factor (SRF)-dependent transcription possibly by inducing nuclear translocation of MKL1 or MKL2 and through a mechanism requiring Rho-actin signaling. In Sus scrofa (Pig), this protein is Actin-binding Rho-activating protein (ABRA).